A 123-amino-acid chain; its full sequence is uncharacterized protein (123 aa).

This is an uncharacterized protein from Escherichia coli O157:H7.